The sequence spans 421 residues: Mannose-1-phosphate guanylyltransferase regulatory subunit alpha (421 aa).

The segment at 2–252 is substrate-binding domain; sequence LKAVILIGGP…EGCWSQIKSA (251 aa). GDP-alpha-D-mannose contacts are provided by Glu85 and Gln248. Residues 274–421 form a hexapeptide repeat domain region; that stretch reads LASTKEGGPT…SRSFKNQIIL (148 aa). Residues 357-385 form a C-loop region; that stretch reads TPSDPNPNDPYSKIDSETLFREGKLTPSI.

It belongs to the transferase hexapeptide repeat family. In terms of assembly, component of the GMPPA-GMPPB mannose-1-phosphate guanylyltransferase complex composed of 4 gmppa subunits and 8 gmppb subunits; the complex is organized into three layers, a central layer made up of 2 gmppa dimers sandwiched between two layers each made up of 2 gmppb dimers.

The protein localises to the cytoplasm. Functionally, regulatory subunit of the GMPPA-GMPPB mannose-1-phosphate guanylyltransferase complex; reduces the catalytic activity of GMPPB when part of the complex. Mediates allosteric feedback inhibition of GMPPB catalytic activity upon binding GDP-alpha-D-mannose. Together with GMPPB regulates GDP-alpha-D-mannose levels. This is Mannose-1-phosphate guanylyltransferase regulatory subunit alpha (gmppa) from Xenopus tropicalis (Western clawed frog).